The primary structure comprises 526 residues: Arginine/ornithine antiporter ArcD1 (526 aa).

Transmembrane regions (helical) follow at residues 8–28, 41–61, 88–108, 128–148, 160–180, 220–240, 255–275, 297–317, 354–374, 378–398, 407–427, 428–448, 466–486, and 495–515; these read GIGLAALVAIIVSGAIGGGVF, GGVVISWIVIGFGILMLVLSL, FISGWGYWLSAWAGNIAFAVL, LTILSVIVVSIVSWGLTLLVM, IVLVAKLIPLFVFVIAGIVTF, VKGSLMVMIWVFVGIEGAAMM, IFGLIALLVIYILLSLLPFGF, VGGWGGSLMAIGLVISLLGAW, LLLTQLIVQIFLIVTYFVADA, FVYLCTAVIMICYALVGLYLF, TSNIIIGFIAAAFQILALYYS, GWQFVWLSLILYAVGFILYAL, FILTVLGILAVFGVYGNWLGL, and NTLLVAVVPLIVVTFIVYFVV.

This sequence belongs to the amino acid-polyamine-organocation (APC) superfamily. Basic amino acid/polyamine antiporter (APA) (TC 2.A.3.2) family.

It is found in the cell membrane. The catalysed reaction is L-ornithine(in) + L-arginine(out) = L-ornithine(out) + L-arginine(in). In terms of biological role, catalyzes electroneutral exchange between L-arginine and L-ornithine. Can also efficiently translocate L-histidine and L-lysine. ArcD1 is the main L-arginine/L-ornithine exchanger in the arginine deiminase (ADI) pathway. The chain is Arginine/ornithine antiporter ArcD1 from Lactococcus lactis subsp. cremoris (strain MG1363).